We begin with the raw amino-acid sequence, 206 residues long: Ion-translocating oxidoreductase complex subunit G (206 aa).

Residues 9 to 29 (GITLALFAAGSTGLTAAINQM) form a helical membrane-spanning segment. An FMN phosphoryl threonine modification is found at Thr-174.

Belongs to the RnfG family. The complex is composed of six subunits: RsxA, RsxB, RsxC, RsxD, RsxE and RsxG. The cofactor is FMN.

Its subcellular location is the cell inner membrane. In terms of biological role, part of a membrane-bound complex that couples electron transfer with translocation of ions across the membrane. Required to maintain the reduced state of SoxR. This Escherichia coli O157:H7 protein is Ion-translocating oxidoreductase complex subunit G.